The sequence spans 508 residues: Catalase (508 aa).

Active-site residues include H63 and N136. Residue Y346 coordinates heme.

Belongs to the catalase family. As to quaternary structure, homohexamer. Heme serves as cofactor.

It is found in the cytoplasm. The catalysed reaction is 2 H2O2 = O2 + 2 H2O. Its function is as follows. Decomposes hydrogen peroxide into water and oxygen; serves to protect cells from the toxic effects of hydrogen peroxide. This is Catalase (katA) from Haemophilus influenzae (strain ATCC 51907 / DSM 11121 / KW20 / Rd).